Consider the following 41-residue polypeptide: trp operon leader peptide (41 aa).

Functionally, this protein is involved in control of the biosynthesis of tryptophan. The protein is trp operon leader peptide (trpL) of Vibrio parahaemolyticus serotype O3:K6 (strain RIMD 2210633).